A 494-amino-acid polypeptide reads, in one-letter code: Protein translocase subunit SecD (494 aa).

The next 6 membrane-spanning stretches (helical) occupy residues 7 to 27, 322 to 342, 345 to 365, 372 to 392, 420 to 440, and 441 to 461; these read WFAL…NLPF, LIAA…FYRL, FIAI…YALI, PGVA…VLIF, IIDG…LGTG, and FVKG…FTAL.

It belongs to the SecD/SecF family. SecD subfamily. As to quaternary structure, forms a complex with SecF. Part of the essential Sec protein translocation apparatus which comprises SecA, SecYEG and auxiliary proteins SecDF. Other proteins may also be involved.

Its subcellular location is the cell inner membrane. Its function is as follows. Part of the Sec protein translocase complex. Interacts with the SecYEG preprotein conducting channel. SecDF uses the proton motive force (PMF) to complete protein translocation after the ATP-dependent function of SecA. Probably participates in protein translocation into and across both the cytoplasmic and thylakoid membranes in cyanobacterial cells. The chain is Protein translocase subunit SecD from Prochlorococcus marinus (strain SARG / CCMP1375 / SS120).